We begin with the raw amino-acid sequence, 332 residues long: Olfactory receptor 10G6 (332 aa).

The Extracellular portion of the chain corresponds to 1–46; that stretch reads MLEGVEHLLLLLLLTDVNSKELQSGNQTSVSHFILVGLHHPPQLGA. Asn-26 carries N-linked (GlcNAc...) asparagine glycosylation. The chain crosses the membrane as a helical span at residues 47–67; the sequence is PLFLAFLVIYLLTVSGNGLII. Residues 68 to 75 lie on the Cytoplasmic side of the membrane; sequence LTVLVDIR. Residues 76-96 traverse the membrane as a helical segment; sequence LHRPMCLFLCHLSFLDMTISC. Over 97-120 the chain is Extracellular; the sequence is AIVPKMLAGFLLGSRIISFGGCVI. Cys-118 and Cys-210 are oxidised to a cystine. Residues 121–141 traverse the membrane as a helical segment; sequence QLFSFHFLGCTECFLYTLMAY. The Cytoplasmic segment spans residues 142–160; that stretch reads DRFLAICKPLHYATIMTHR. The chain crosses the membrane as a helical span at residues 161–181; the sequence is VCNSLALGTWLGGTIHSLFQT. Topologically, residues 182–218 are extracellular; sequence SFVFRLPFCGPNRVDYIFCDIPAMLRLACADTAINEL. The chain crosses the membrane as a helical span at residues 219 to 238; sequence VTFADIGFLALTCFMLILTS. Residues 239–258 are Cytoplasmic-facing; that stretch reads YGYIVAAILRIPSADGRRNA. Residues 259 to 279 traverse the membrane as a helical segment; it reads FSTCAAHLTVVIVYYVPCTFI. At 280–290 the chain is on the extracellular side; the sequence is YLRPCSQEPLD. The helical transmembrane segment at 291–311 threads the bilayer; the sequence is GVVAVFYTVITPLLNSIIYTL. Residues 312-332 lie on the Cytoplasmic side of the membrane; that stretch reads CNKEMKAALQRLGGHKEVQPH.

It belongs to the G-protein coupled receptor 1 family.

It localises to the cell membrane. Odorant receptor. This is Olfactory receptor 10G6 (OR10G6) from Homo sapiens (Human).